The sequence spans 527 residues: Bifunctional purine biosynthesis protein PurH (527 aa).

The MGS-like domain maps to 1-149 (MTADLLPVRR…KNFARVAVAT (149 aa)).

It belongs to the PurH family.

The enzyme catalyses (6R)-10-formyltetrahydrofolate + 5-amino-1-(5-phospho-beta-D-ribosyl)imidazole-4-carboxamide = 5-formamido-1-(5-phospho-D-ribosyl)imidazole-4-carboxamide + (6S)-5,6,7,8-tetrahydrofolate. It catalyses the reaction IMP + H2O = 5-formamido-1-(5-phospho-D-ribosyl)imidazole-4-carboxamide. Its pathway is purine metabolism; IMP biosynthesis via de novo pathway; 5-formamido-1-(5-phospho-D-ribosyl)imidazole-4-carboxamide from 5-amino-1-(5-phospho-D-ribosyl)imidazole-4-carboxamide (10-formyl THF route): step 1/1. It participates in purine metabolism; IMP biosynthesis via de novo pathway; IMP from 5-formamido-1-(5-phospho-D-ribosyl)imidazole-4-carboxamide: step 1/1. This is Bifunctional purine biosynthesis protein PurH from Stenotrophomonas maltophilia (strain K279a).